A 306-amino-acid chain; its full sequence is Putative syntaxin-3 (306 aa).

Residues 1–279 lie on the Cytoplasmic side of the membrane; the sequence is MPRDRLKELQ…QKRARKMKVC (279 aa). The segment at 40-180 is required for the regulation of the defecation motor program; that stretch reads QDADFEMFLE…QLSDEEIENA (141 aa). One can recognise a t-SNARE coiled-coil homology domain in the interval 204–266; sequence YDEVKSRADE…KQARGNVEEA (63 aa). The helical; Anchor for type IV membrane protein transmembrane segment at 280–300 threads the bilayer; the sequence is IIIGSIIAVLILILFIQSAVC. Residues 301–306 are Extracellular-facing; it reads HFTPIC.

This sequence belongs to the syntaxin family. As to expression, expressed in body wall, pharyngeal, vulval and enteric muscles and in some head neurons.

It is found in the cell membrane. Its function is as follows. Potentially involved in docking of synaptic vesicles at presynaptic active zones. Acts in the intestine to regulate anterior body muscle contractions (aBOC) and the expulsion steps during the defecation motor program (DMP). In Caenorhabditis elegans, this protein is Putative syntaxin-3.